A 203-amino-acid chain; its full sequence is FMN-dependent NADH:quinone oxidoreductase (203 aa).

143-146 contributes to the FMN binding site; the sequence is SNGG.

Belongs to the azoreductase type 1 family. As to quaternary structure, homodimer. FMN serves as cofactor.

It catalyses the reaction 2 a quinone + NADH + H(+) = 2 a 1,4-benzosemiquinone + NAD(+). The catalysed reaction is N,N-dimethyl-1,4-phenylenediamine + anthranilate + 2 NAD(+) = 2-(4-dimethylaminophenyl)diazenylbenzoate + 2 NADH + 2 H(+). Functionally, quinone reductase that provides resistance to thiol-specific stress caused by electrophilic quinones. Its function is as follows. Also exhibits azoreductase activity. Catalyzes the reductive cleavage of the azo bond in aromatic azo compounds to the corresponding amines. The protein is FMN-dependent NADH:quinone oxidoreductase of Streptococcus suis (strain 98HAH33).